A 469-amino-acid chain; its full sequence is Aspartyl/glutamyl-tRNA(Asn/Gln) amidotransferase subunit B (469 aa).

This sequence belongs to the GatB/GatE family. GatB subfamily. In terms of assembly, heterotrimer of A, B and C subunits.

The catalysed reaction is L-glutamyl-tRNA(Gln) + L-glutamine + ATP + H2O = L-glutaminyl-tRNA(Gln) + L-glutamate + ADP + phosphate + H(+). It catalyses the reaction L-aspartyl-tRNA(Asn) + L-glutamine + ATP + H2O = L-asparaginyl-tRNA(Asn) + L-glutamate + ADP + phosphate + 2 H(+). Allows the formation of correctly charged Asn-tRNA(Asn) or Gln-tRNA(Gln) through the transamidation of misacylated Asp-tRNA(Asn) or Glu-tRNA(Gln) in organisms which lack either or both of asparaginyl-tRNA or glutaminyl-tRNA synthetases. The reaction takes place in the presence of glutamine and ATP through an activated phospho-Asp-tRNA(Asn) or phospho-Glu-tRNA(Gln). The sequence is that of Aspartyl/glutamyl-tRNA(Asn/Gln) amidotransferase subunit B from Methanococcus maripaludis (strain C5 / ATCC BAA-1333).